A 295-amino-acid polypeptide reads, in one-letter code: 33 kDa chaperonin (295 aa).

Disulfide bonds link C237–C239 and C270–C273.

The protein belongs to the HSP33 family. Under oxidizing conditions two disulfide bonds are formed involving the reactive cysteines. Under reducing conditions zinc is bound to the reactive cysteines and the protein is inactive.

It localises to the cytoplasm. Functionally, redox regulated molecular chaperone. Protects both thermally unfolding and oxidatively damaged proteins from irreversible aggregation. Plays an important role in the bacterial defense system toward oxidative stress. The protein is 33 kDa chaperonin of Lactiplantibacillus plantarum (strain ATCC BAA-793 / NCIMB 8826 / WCFS1) (Lactobacillus plantarum).